A 250-amino-acid chain; its full sequence is Uracil-DNA glycosylase (250 aa).

D78 acts as the Proton acceptor in catalysis. The disordered stretch occupies residues 228-250 (RGQKPVDWSGEQNNASRQGKFAL).

It belongs to the uracil-DNA glycosylase (UDG) superfamily. UNG family.

Its subcellular location is the cytoplasm. The catalysed reaction is Hydrolyzes single-stranded DNA or mismatched double-stranded DNA and polynucleotides, releasing free uracil.. In terms of biological role, excises uracil residues from the DNA which can arise as a result of misincorporation of dUMP residues by DNA polymerase or due to deamination of cytosine. This is Uracil-DNA glycosylase from Bordetella bronchiseptica (strain ATCC BAA-588 / NCTC 13252 / RB50) (Alcaligenes bronchisepticus).